A 334-amino-acid polypeptide reads, in one-letter code: 4-hydroxy-2-methyl-3-oxo-4-farnesyl-3,4-dihydroquinoline-1-oxide ketoreductase (334 aa).

Y139 serves as the catalytic Proton donor.

This sequence belongs to the 3-beta-HSD family.

The catalysed reaction is aurachin B + NAD(+) + H2O = 4-hydroxy-2-methyl-3-oxo-4-[(2E,6E)-farnesyl]-3,4-dihydroquinoline 1-oxide + NADH. It carries out the reaction 3,4-dihydroxy-2-methyl-4-[(2E,6E)-farnesyl]-3,4-dihydroquinoline 1-oxide + NAD(+) = 4-hydroxy-2-methyl-3-oxo-4-[(2E,6E)-farnesyl]-3,4-dihydroquinoline 1-oxide + NADH + H(+). Ketoreductase that catalyzes the final step in the conversion of aurachin C to aurachin B. Catalyzes the reduction of 4-hydroxy-2-methyl-3-oxo-4-[(2E,6E)-farnesyl]-3,4-dihydroquinoline-1-oxide to form 3,4-dihydroxy-2-methyl-4-[(2E,6E)-farnesyl]-3,4-dihydroquinoline 1-oxide, which then undergoes a spontaneous dehydration to form aurachin B. Accepts both NADH and NADPH, but has a preference for NADH. The polypeptide is 4-hydroxy-2-methyl-3-oxo-4-farnesyl-3,4-dihydroquinoline-1-oxide ketoreductase (Stigmatella aurantiaca).